The sequence spans 159 residues: 6,7-dimethyl-8-ribityllumazine synthase (159 aa).

5-amino-6-(D-ribitylamino)uracil is bound by residues W26, 58 to 60 (SFE), and 80 to 82 (VVI). Residue 85–86 (GT) participates in (2S)-2-hydroxy-3-oxobutyl phosphate binding. H88 serves as the catalytic Proton donor. F113 contributes to the 5-amino-6-(D-ribitylamino)uracil binding site. R127 is a (2S)-2-hydroxy-3-oxobutyl phosphate binding site.

It belongs to the DMRL synthase family.

The catalysed reaction is (2S)-2-hydroxy-3-oxobutyl phosphate + 5-amino-6-(D-ribitylamino)uracil = 6,7-dimethyl-8-(1-D-ribityl)lumazine + phosphate + 2 H2O + H(+). The protein operates within cofactor biosynthesis; riboflavin biosynthesis; riboflavin from 2-hydroxy-3-oxobutyl phosphate and 5-amino-6-(D-ribitylamino)uracil: step 1/2. Its function is as follows. Catalyzes the formation of 6,7-dimethyl-8-ribityllumazine by condensation of 5-amino-6-(D-ribitylamino)uracil with 3,4-dihydroxy-2-butanone 4-phosphate. This is the penultimate step in the biosynthesis of riboflavin. In Renibacterium salmoninarum (strain ATCC 33209 / DSM 20767 / JCM 11484 / NBRC 15589 / NCIMB 2235), this protein is 6,7-dimethyl-8-ribityllumazine synthase.